We begin with the raw amino-acid sequence, 96 residues long: Co-chaperonin GroES (96 aa).

It belongs to the GroES chaperonin family. As to quaternary structure, heptamer of 7 subunits arranged in a ring. Interacts with the chaperonin GroEL.

The protein localises to the cytoplasm. Together with the chaperonin GroEL, plays an essential role in assisting protein folding. The GroEL-GroES system forms a nano-cage that allows encapsulation of the non-native substrate proteins and provides a physical environment optimized to promote and accelerate protein folding. GroES binds to the apical surface of the GroEL ring, thereby capping the opening of the GroEL channel. This Wolbachia sp. subsp. Brugia malayi (strain TRS) protein is Co-chaperonin GroES.